The chain runs to 183 residues: Inosine triphosphate pyrophosphatase (183 aa).

8 to 13 (TGNKNK) lines the ITP pocket. Position 36 (Glu-36) interacts with Mg(2+). Residues Lys-48, 64–65 (DT), Lys-81, 140–143 (FGWD), Lys-161, and 166–167 (HR) each bind ITP.

Belongs to the HAM1 NTPase family. Homodimer. Mg(2+) serves as cofactor. Requires Mn(2+) as cofactor.

It is found in the cytoplasm. The protein localises to the nucleus. The catalysed reaction is ITP + H2O = IMP + diphosphate + H(+). It catalyses the reaction dITP + H2O = dIMP + diphosphate + H(+). It carries out the reaction XTP + H2O = XMP + diphosphate + H(+). Pyrophosphatase that hydrolyzes non-canonical purine nucleotides such as inosine triphosphate (ITP), deoxyinosine triphosphate (dITP) or xanthosine 5'-triphosphate (XTP) to their respective monophosphate derivatives. The enzyme does not distinguish between the deoxy- and ribose forms. Probably excludes non-canonical purines from RNA and DNA precursor pools, thus preventing their incorporation into RNA and DNA and avoiding chromosomal lesions. The protein is Inosine triphosphate pyrophosphatase of Ajellomyces capsulatus (strain G186AR / H82 / ATCC MYA-2454 / RMSCC 2432) (Darling's disease fungus).